The primary structure comprises 243 residues: MSLYRDEGIVLRTQDLGEADRIVTLLTRRTGLVRAVGKGVRRTRSRFGARLEPFTHIDVQLHAGKSLDVVTQVDTLHAYGSVLVTDYPRYTAGVAMLETAEKVVSVEKDPALRQFLLLWGGLRTLAEGAHDPRLVLDAYLLRSLAVAGYAPALEECAHCGVPGPHREFAVHAGGMVCSLCRPAGSVKPSPAAVALMVALLRGDWESADASAERDRTECSGLVAAYLQWHLENGVRSLRLVERA.

It belongs to the RecO family.

Its function is as follows. Involved in DNA repair and RecF pathway recombination. This Thermobifida fusca (strain YX) protein is DNA repair protein RecO.